Here is a 159-residue protein sequence, read N- to C-terminus: 2-C-methyl-D-erythritol 2,4-cyclodiphosphate synthase (159 aa).

2 residues coordinate a divalent metal cation: D10 and H12. 4-CDP-2-C-methyl-D-erythritol 2-phosphate is bound by residues 10 to 12 (DVH) and 36 to 37 (HS). An a divalent metal cation-binding site is contributed by H44. 4-CDP-2-C-methyl-D-erythritol 2-phosphate-binding positions include 58–60 (DIG) and R144.

This sequence belongs to the IspF family. Homotrimer. Requires a divalent metal cation as cofactor.

The catalysed reaction is 4-CDP-2-C-methyl-D-erythritol 2-phosphate = 2-C-methyl-D-erythritol 2,4-cyclic diphosphate + CMP. It participates in isoprenoid biosynthesis; isopentenyl diphosphate biosynthesis via DXP pathway; isopentenyl diphosphate from 1-deoxy-D-xylulose 5-phosphate: step 4/6. Involved in the biosynthesis of isopentenyl diphosphate (IPP) and dimethylallyl diphosphate (DMAPP), two major building blocks of isoprenoid compounds. Catalyzes the conversion of 4-diphosphocytidyl-2-C-methyl-D-erythritol 2-phosphate (CDP-ME2P) to 2-C-methyl-D-erythritol 2,4-cyclodiphosphate (ME-CPP) with a corresponding release of cytidine 5-monophosphate (CMP). This is 2-C-methyl-D-erythritol 2,4-cyclodiphosphate synthase from Paraburkholderia phymatum (strain DSM 17167 / CIP 108236 / LMG 21445 / STM815) (Burkholderia phymatum).